The primary structure comprises 39 residues: Large ribosomal subunit protein bL36 (39 aa).

The protein belongs to the bacterial ribosomal protein bL36 family.

The chain is Large ribosomal subunit protein bL36 from Levilactobacillus brevis (strain ATCC 367 / BCRC 12310 / CIP 105137 / JCM 1170 / LMG 11437 / NCIMB 947 / NCTC 947) (Lactobacillus brevis).